Consider the following 192-residue polypeptide: Glycerol-3-phosphate acyltransferase (192 aa).

Transmembrane regions (helical) follow at residues 4 to 24, 54 to 74, 80 to 100, 112 to 132, and 154 to 174; these read MFWL…AILL, LAIL…LIAS, IAQQ…PVYF, AGVL…AWLL, and LLAW…LLIV.

This sequence belongs to the PlsY family. As to quaternary structure, probably interacts with PlsX.

Its subcellular location is the cell inner membrane. The catalysed reaction is an acyl phosphate + sn-glycerol 3-phosphate = a 1-acyl-sn-glycero-3-phosphate + phosphate. Its pathway is lipid metabolism; phospholipid metabolism. Catalyzes the transfer of an acyl group from acyl-phosphate (acyl-PO(4)) to glycerol-3-phosphate (G3P) to form lysophosphatidic acid (LPA). This enzyme utilizes acyl-phosphate as fatty acyl donor, but not acyl-CoA or acyl-ACP. This Pseudomonas savastanoi pv. phaseolicola (strain 1448A / Race 6) (Pseudomonas syringae pv. phaseolicola (strain 1448A / Race 6)) protein is Glycerol-3-phosphate acyltransferase.